The primary structure comprises 1163 residues: Protein phosphatase 1 regulatory subunit 26 (1163 aa).

Residues 65–83 are compositionally biased toward basic and acidic residues; the sequence is HERLTQRGQRAERSRDTRL. Disordered regions lie at residues 65–91, 144–253, 266–393, 463–496, 514–653, 672–929, and 1073–1163; these read HERL…AVCK, RGGA…TSAR, RKPP…KKKL, APME…NIDS, VGSP…DEDL, RDPR…TATA, and TQPG…GLKL. Polar residues-rich tracts occupy residues 163–179 and 189–201; these read HSST…TPGS and DQGS…MSSE. Over residues 208 to 236 the composition is skewed to basic and acidic residues; it reads IRAEIEQFLNEKRQHENPKCDGFVDKKSD. Polar residues predominate over residues 273–297; sequence KMSTQQRNFQPKPTTEPETPVSTKL. The segment covering 315–324 has biased composition (basic residues); it reads MPARRSKRIR. The span at 515–535 shows a compositional bias: low complexity; that stretch reads GSPQPAQGPLSSPGPSGQPGI. Basic and acidic residues-rich tracts occupy residues 566–581 and 634–645; these read KIRE…DHIQ and ATEKESSEDKSS. Residues 672–682 show a composition bias toward basic residues; the sequence is RDPRASCKKVR. Low complexity predominate over residues 766–780; it reads TGASGHPPSASSPTS. Residues 783-792 show a composition bias toward acidic residues; sequence SAVDSDDSIE. 2 stretches are compositionally biased toward basic and acidic residues: residues 793 to 808 and 850 to 859; these read LEIR…ESIR and EGRRGPERAR. Polar residues predominate over residues 860–871; that stretch reads TQATGLLSQSGK. Low complexity predominate over residues 901–910; sequence SSAKASPPSR. Over residues 1105–1131 the composition is skewed to basic and acidic residues; that stretch reads QQDRRNSASEDKVLDLRYRHRVDREPQ. Phosphoserine is present on S1111. Polar residues-rich tracts occupy residues 1133–1146 and 1154–1163; these read QETL…FSDT and ATVSSKGLKL.

Interacts with UTP20 and PPP1CA.

The protein localises to the nucleus. Its subcellular location is the nucleolus. In terms of biological role, inhibits phosphatase activity of protein phosphatase 1 (PP1) complexes. May positively regulate cell proliferation. The protein is Protein phosphatase 1 regulatory subunit 26 (Ppp1r26) of Mus musculus (Mouse).